The primary structure comprises 108 residues: ADM5 (108 aa).

The N-terminal stretch at 1 to 18 (MTAHILLLWLFASSILGD) is a signal peptide. Positions 19-25 (PDSAGRL) are excised as a propeptide. Cysteine 38 and cysteine 43 are joined by a disulfide. Residues 61-108 (KELSGKAGRKPQDPYSYGRRRRRRRRRREARLLRRLQDPSLRRAQLAG) are disordered. Tyrosine 77 carries the post-translational modification Tyrosine amide. The span at 78–89 (GRRRRRRRRRRE) shows a compositional bias: basic residues. Residues 89 to 108 (EARLLRRLQDPSLRRAQLAG) constitute a propeptide that is removed on maturation. The span at 90-101 (ARLLRRLQDPSL) shows a compositional bias: basic and acidic residues.

It belongs to the adrenomedullin family. In terms of tissue distribution, expressed abundantly in the spleen and thymus. Also expressed in adrenal and pituitary. Not expressed in brain, heart, kidney, liver and stomach.

The protein resides in the secreted. Its function is as follows. Seems to have a peripheral vasodepressor effect and a central vasopressor effect. This chain is ADM5 (ADM5), found in Sus scrofa (Pig).